Here is a 363-residue protein sequence, read N- to C-terminus: Flagellar P-ring protein (363 aa).

The signal sequence occupies residues 1–20 (MKIKVLLAVALLAMTVPVKA).

It belongs to the FlgI family. In terms of assembly, the basal body constitutes a major portion of the flagellar organelle and consists of four rings (L,P,S, and M) mounted on a central rod.

The protein localises to the periplasm. The protein resides in the bacterial flagellum basal body. Its function is as follows. Assembles around the rod to form the L-ring and probably protects the motor/basal body from shearing forces during rotation. This Shewanella amazonensis (strain ATCC BAA-1098 / SB2B) protein is Flagellar P-ring protein.